Consider the following 595-residue polypeptide: MQIIEIREPEQTDFKQKQQIAVGIDFGTTNSLIAIATDRKVKVIKSIDDKEITPTTIDFTSNNFTIGNNKGLRSIKRLFGKTLKEILNTPALFSLVKDYLDVNSNELKLNFANRRIRICEIAAEVFIYLKNQAEEQLKTHITKAVITVPAHFNDAARGEVMLAAKIAGFEVLRLIAEPTAAAYAYGLNNNQKGCYLVYDLGGGTFDVSILNIQEGIFQVIATSGDNMLGGDDIDVVITQYLCNKFDLPNSIDTLQLAKKAKETLTYKDSFNNDNISINRQILEQLILPLVEYTINIAQECLAQAGNPNIDGVILVGGVTRIPLIKDELYKAFKVDILSDIDPDKAVVWGAALQADNLIAPHTNSLLIDVVPLSLGMELYGGIVEKIIMRNTPIPIAVVKEFTTYADNQTGIQFHILQGEREMAVDCRSLARFELKGLPPMKAGNIRAEVTFAIDADGILSVSAYEKISNTSHTIEVKPNHGIDNTEIDIMLENAYKNAQIDYTTRLLQEAIIEAEALISSIEGAMAELTTLLSESEISVINSLLDNIKAAAKARDRILINNSIKEFKSKINKSMDTNLNIIINGVLKGKNINQIQ.

It belongs to the heat shock protein 70 family.

Chaperone involved in the maturation of iron-sulfur cluster-containing proteins. Has a low intrinsic ATPase activity which is markedly stimulated by HscB. This is Chaperone protein HscA homolog from Rickettsia akari (strain Hartford).